Here is a 532-residue protein sequence, read N- to C-terminus: Alkaline phosphatase (532 aa).

Positions 1 to 20 (MASERDPLLPVHGEGPESPS) are disordered. A helical; Signal-anchor for type II membrane protein transmembrane segment spans residues 27 to 47 (WIKHGILLILVLSTVIFFYFF). Mg(2+) is bound at residue Asp-68. Asp-68 serves as a coordination point for Zn(2+). Ser-115 (phosphoserine intermediate) is an active-site residue. Residues Asp-166, Thr-168, and Glu-306 each coordinate Mg(2+). Asp-311, His-315, Asp-352, His-353, and His-456 together coordinate Zn(2+).

This sequence belongs to the alkaline phosphatase family. It depends on Mg(2+) as a cofactor. Requires Zn(2+) as cofactor.

Its subcellular location is the membrane. The enzyme catalyses a phosphate monoester + H2O = an alcohol + phosphate. This is Alkaline phosphatase from Schizosaccharomyces pombe (strain 972 / ATCC 24843) (Fission yeast).